The chain runs to 434 residues: 3-phosphoshikimate 1-carboxyvinyltransferase (434 aa).

Residues Lys-22, Ser-23, and Arg-27 each contribute to the 3-phosphoshikimate site. A phosphoenolpyruvate-binding site is contributed by Lys-22. Phosphoenolpyruvate contacts are provided by Gly-94 and Arg-122. Residues Ser-169, Ser-170, Gln-171, Ser-199, Asp-320, and Lys-347 each coordinate 3-phosphoshikimate. Gln-171 contacts phosphoenolpyruvate. Asp-320 (proton acceptor) is an active-site residue. Positions 351, 395, and 420 each coordinate phosphoenolpyruvate.

Belongs to the EPSP synthase family. Monomer.

The protein resides in the cytoplasm. The enzyme catalyses 3-phosphoshikimate + phosphoenolpyruvate = 5-O-(1-carboxyvinyl)-3-phosphoshikimate + phosphate. Its pathway is metabolic intermediate biosynthesis; chorismate biosynthesis; chorismate from D-erythrose 4-phosphate and phosphoenolpyruvate: step 6/7. Its function is as follows. Catalyzes the transfer of the enolpyruvyl moiety of phosphoenolpyruvate (PEP) to the 5-hydroxyl of shikimate-3-phosphate (S3P) to produce enolpyruvyl shikimate-3-phosphate and inorganic phosphate. The polypeptide is 3-phosphoshikimate 1-carboxyvinyltransferase (Ralstonia pickettii (strain 12J)).